The chain runs to 430 residues: Tyrosine--tRNA ligase (430 aa).

Residue Y32 coordinates L-tyrosine. Positions 37–46 (PTADSLHIGH) match the 'HIGH' region motif. The L-tyrosine site is built by Y172 and Q176. The 'KMSKS' region motif lies at 232–236 (KFGKT). Position 235 (K235) interacts with ATP. Positions 362–429 (IKAVDLCTEK…GKKNYYLLIA (68 aa)) constitute an S4 RNA-binding domain.

The protein belongs to the class-I aminoacyl-tRNA synthetase family. TyrS type 1 subfamily. In terms of assembly, homodimer.

The protein resides in the cytoplasm. It carries out the reaction tRNA(Tyr) + L-tyrosine + ATP = L-tyrosyl-tRNA(Tyr) + AMP + diphosphate + H(+). Catalyzes the attachment of tyrosine to tRNA(Tyr) in a two-step reaction: tyrosine is first activated by ATP to form Tyr-AMP and then transferred to the acceptor end of tRNA(Tyr). The chain is Tyrosine--tRNA ligase from Parabacteroides distasonis (strain ATCC 8503 / DSM 20701 / CIP 104284 / JCM 5825 / NCTC 11152).